Consider the following 104-residue polypeptide: N(4)-acetylcytidine amidohydrolase (104 aa).

Positions 6-101 (TFFERFEHDI…EQLYMIRFKV (96 aa)) constitute an ASCH domain. The Proton acceptor role is filled by K20. The active-site Nucleophile is T23. The active-site Proton donor is E73.

It belongs to the N(4)-acetylcytidine amidohydrolase family.

It carries out the reaction N(4)-acetylcytidine + H2O = cytidine + acetate + H(+). The catalysed reaction is N(4)-acetyl-2'-deoxycytidine + H2O = 2'-deoxycytidine + acetate + H(+). It catalyses the reaction N(4)-acetylcytosine + H2O = cytosine + acetate + H(+). Functionally, catalyzes the hydrolysis of N(4)-acetylcytidine (ac4C). The polypeptide is N(4)-acetylcytidine amidohydrolase (Shewanella oneidensis (strain ATCC 700550 / JCM 31522 / CIP 106686 / LMG 19005 / NCIMB 14063 / MR-1)).